Reading from the N-terminus, the 356-residue chain is Alpha-N-acetylneuraminide alpha-2,8-sialyltransferase (356 aa).

Over 1-29 the chain is Cytoplasmic; sequence MSPCGRARRHTSRGAMAVLAWKFPRTRLP. A helical; Signal-anchor for type II membrane protein transmembrane segment spans residues 30-48; that stretch reads VGASALCVVVLCWLYVFPV. The Lumenal segment spans residues 49–356; that stretch reads YRLPDEKEIV…CEDNSLQPTS (308 aa). N-linked (GlcNAc...) asparagine glycans are attached at residues asparagine 71 and asparagine 119. Cysteines 138 and 287 form a disulfide. The CMP-N-acetyl-beta-neuraminate site is built by asparagine 143 and asparagine 166. N-linked (GlcNAc...) asparagine glycans are attached at residues asparagine 214 and asparagine 245. Positions 274, 275, 276, 296, and 310 each coordinate CMP-N-acetyl-beta-neuraminate.

It belongs to the glycosyltransferase 29 family.

It localises to the golgi apparatus membrane. The enzyme catalyses an N-acetyl-alpha-neuraminyl-(2-&gt;3)-beta-D-galactosyl derivative + CMP-N-acetyl-beta-neuraminate = an N-acetyl-alpha-neuraminyl-(2-&gt;8)-N-acetyl-alpha-neuraminyl-(2-&gt;3)-beta-D-galactosyl derivative + CMP + H(+). It carries out the reaction a ganglioside GM3 (d18:1(4E)) + CMP-N-acetyl-beta-neuraminate = a ganglioside GD3 (d18:1(4E)) + CMP + H(+). The catalysed reaction is a ganglioside GD3 (d18:1(4E)) + CMP-N-acetyl-beta-neuraminate = a ganglioside GT3 (d18:1(4E)) + CMP + H(+). It catalyses the reaction a ganglioside GD1a (d18:1(4E)) + CMP-N-acetyl-beta-neuraminate = a ganglioside GT1a (d18:1(4E)) + CMP + H(+). The enzyme catalyses a ganglioside GT1b (d18:1(4E)) + CMP-N-acetyl-beta-neuraminate = a ganglioside GQ1b (d18:1(4E)) + CMP + H(+). It carries out the reaction a ganglioside GM1b (d18:1(4E)) + CMP-N-acetyl-beta-neuraminate = a ganglioside GD1c (d18:1(4E)) + CMP + H(+). The catalysed reaction is a ganglioside GD3 + CMP-N-acetyl-beta-neuraminate = a ganglioside GT3 + CMP + H(+). It catalyses the reaction [alpha-N-acetylneuraminyl-(2-&gt;8)](n)-alpha-N-acetylneuraminyl-(2-&gt;8)-alpha-N-acetylneuraminyl-(2-&gt;3)-beta-D-galactosyl-(1-&gt;4)-beta-D-glucosyl-(1&lt;-&gt;1)-ceramide + CMP-N-acetyl-beta-neuraminate = [alpha-N-acetylneuraminyl-(2-&gt;8)](n+1)-alpha-N-acetylneuraminyl-(2-&gt;8)-alpha-N-acetylneuraminyl-(2-&gt;3)-beta-D-galactosyl-(1-&gt;4)-beta-D-glucosyl-(1&lt;-&gt;1)-ceramide + CMP + H(+). It functions in the pathway protein modification; protein glycosylation. Its pathway is lipid metabolism; sphingolipid metabolism. Its function is as follows. Catalyzes the addition of sialic acid in alpha 2,8-linkage to the sialic acid moiety of the ganglioside GM3 to form ganglioside GD3; gangliosides are a subfamily of complex glycosphingolipds that contain one or more residues of sialic acid. Can catalyze the addition of a second alpha-2,8- sialic acid to GD3 to form GT3. Can use GM1b, GD1a and GT1b as acceptor substrates to synthesize GD1c, GT1a and GQ1b respectively. This Bos taurus (Bovine) protein is Alpha-N-acetylneuraminide alpha-2,8-sialyltransferase.